We begin with the raw amino-acid sequence, 204 residues long: Ribosomal RNA small subunit methyltransferase G (204 aa).

3 residues coordinate S-adenosyl-L-methionine: G73, F78, and R139.

This sequence belongs to the methyltransferase superfamily. RNA methyltransferase RsmG family.

The protein localises to the cytoplasm. It carries out the reaction guanosine(527) in 16S rRNA + S-adenosyl-L-methionine = N(7)-methylguanosine(527) in 16S rRNA + S-adenosyl-L-homocysteine. Functionally, specifically methylates the N7 position of guanine in position 527 of 16S rRNA. The polypeptide is Ribosomal RNA small subunit methyltransferase G (Coxiella burnetii (strain Dugway 5J108-111)).